The primary structure comprises 214 residues: Urease accessory protein UreF (214 aa).

Residues 70–95 (AAAGEAGDAETDARTPSPAARAASRA) form a disordered region. The span at 83–95 (RTPSPAARAASRA) shows a compositional bias: low complexity.

It belongs to the UreF family. In terms of assembly, ureD, UreF and UreG form a complex that acts as a GTP-hydrolysis-dependent molecular chaperone, activating the urease apoprotein by helping to assemble the nickel containing metallocenter of UreC. The UreE protein probably delivers the nickel.

It localises to the cytoplasm. Functionally, required for maturation of urease via the functional incorporation of the urease nickel metallocenter. This Mycolicibacterium vanbaalenii (strain DSM 7251 / JCM 13017 / BCRC 16820 / KCTC 9966 / NRRL B-24157 / PYR-1) (Mycobacterium vanbaalenii) protein is Urease accessory protein UreF.